The primary structure comprises 310 residues: M1-specific T cell receptor beta chain (310 aa).

The signal sequence occupies residues 1–21; that stretch reads MSNQVLCCVVLCLLGANTVDG. Residues 22-114 are t cell receptor beta variable 19; that stretch reads GITQSPKYLF…TAFYLCASSI (93 aa). Residues 34 to 131 enclose the Ig-like V-type domain; sequence EGQNVTLSCE…FGPGTRLTVT (98 aa). N-linked (GlcNAc...) asparagine glycosylation is present at Asn37. Cys42 and Cys110 are joined by a disulfide. A CDR1 region spans residues 46–50; the sequence is LNHDA. Asp49 is an a peptide antigen binding site. A CDR2 region spans residues 68–73; it reads SQIVND. Residues 110–122 form a CDR3 region; that stretch reads CASSIRSSYEQYF. The tract at residues 117–131 is t cell receptor beta joining 2-7; that stretch reads SYEQYFGPGTRLTVT. Positions 133-310 are t cell receptor beta constant 2; sequence DLKNVFPPKV…AMVKRKDSRG (178 aa). Residues 140-249 enclose the Ig-like C1-type domain; the sequence is PKVAVFEPSE…WTQDRAKPVT (110 aa). An intrachain disulfide couples Cys162 to Cys227. An N-linked (GlcNAc...) asparagine glycan is attached at Asn201. Residues 262 to 276 form a connecting peptide region; it reads CGFTSESYQQGVLSA. The helical transmembrane segment at 277–299 threads the bilayer; the sequence is TILYEILLGKATLYAVLVSALVL. Topologically, residues 300–310 are cytoplasmic; sequence MAMVKRKDSRG.

As to quaternary structure, disulfide-linked heterodimer with TRAV27*01J42*01C*01 alpha chain. The TR primarily interacts via its CDR3-beta domain with M/matrix protein 1-derived peptide (GILGFVFTL) displayed by HLA-A*02.01 in a 'peg-notch' recognition mode. The alpha-beta TR associates with the transmembrane signaling CD3 coreceptor proteins to form the TR-CD3 (TCR). The assembly of alpha-beta TR heterodimers with CD3 occurs in the endoplasmic reticulum where a single alpha-beta TR heterodimer associates with one CD3D-CD3E heterodimer, one CD3G-CD3E heterodimer and one CD247 homodimer forming a stable octameric structure. CD3D-CD3E and CD3G-CD3E heterodimers preferentially associate with TR alpha and TR beta chains (via TM domain), respectively. The association of the CD247 homodimer is the last step of TCR assembly in the endoplasmic reticulum and is required for transport to the cell surface. In terms of tissue distribution, expressed in M/matrix protein 1-specific effector memory CD8-positive T cells readily detectable in the peripheral blood, secondary lymphoid organs and lung (primary site of infection) of IAV infected individuals.

Its subcellular location is the cell membrane. Functionally, the beta chain of TRAV27*01J42*01C*01/TRBV19*01J2S7*01C*02 alpha-beta T cell receptor (TR) clonotype that is specific for HLA-A*02:01-restricted M/matrix protein 1 immunodominant epitope GILGFVFTL of influenza A virus (IAV). Classified as a public TCR clonotype, it is preferentially selected in effector memory CD8-positive T cells among multiple HLA-A*02:01 carriers/individuals and confers long-lived immunity against IAV infection. Can cross-recognize sporadically emerging IAV variants by molecular mimicry, inducing immunity toward different influenza strains. Antigen recognition initiates TR-CD3 clustering on the cell surface and intracellular activation of LCK that phosphorylates the ITAM motifs of CD3G, CD3D, CD3E and CD247 enabling the recruitment of ZAP70. In turn, ZAP70 phosphorylates LAT, which recruits numerous signaling molecules to form the LAT signalosome. The LAT signalosome propagates signal branching to three major signaling pathways, the calcium, the mitogen-activated protein kinase (MAPK) kinase and the nuclear factor NF-kappa-B (NF-kB) pathways, leading to the mobilization of transcription factors that are critical for gene expression and essential for T cell differentiation into effector/memory T cells. The chain is M1-specific T cell receptor beta chain from Homo sapiens (Human).